Consider the following 104-residue polypeptide: Met repressor (104 aa).

It belongs to the MetJ family. Homodimer.

The protein localises to the cytoplasm. Functionally, this regulatory protein, when combined with SAM (S-adenosylmethionine) represses the expression of the methionine regulon and of enzymes involved in SAM synthesis. The sequence is that of Met repressor from Shewanella oneidensis (strain ATCC 700550 / JCM 31522 / CIP 106686 / LMG 19005 / NCIMB 14063 / MR-1).